The sequence spans 182 residues: Troponin I, fast skeletal muscle (182 aa).

N-acetylglycine is present on Gly-2. Positions 2–48 are involved in binding TNC; it reads GDEEKRNRAITARRQHLKSVMLQIAATELEKEESRREAEKQNYLAEH. Thr-12 is modified (phosphothreonine). Positions 97-117 are involved in binding TNC and actin; the sequence is NQKLFDLRGKFKRPPLRRVRM. The residue at position 118 (Ser-118) is a Phosphoserine.

It belongs to the troponin I family. Binds to actin and tropomyosin.

In terms of biological role, troponin I is the inhibitory subunit of troponin, the thin filament regulatory complex which confers calcium-sensitivity to striated muscle actomyosin ATPase activity. The polypeptide is Troponin I, fast skeletal muscle (TNNI2) (Homo sapiens (Human)).